The following is a 264-amino-acid chain: MSRIAGTFAELKHNSRKALVTFITAGDPDLAATEALIPLLAESGADIVELGVPFSDPMADGPTIQLSSERALAAGTTLPKILDMVRRVRTRCQVPIVLMGYYNPILIHGLERFAADASAAGVDGVLLVDLPPEEAAEFKACADRHGLDVIFLLTPTSDEGRIRKVARQARGFVYYVSVTGVTGARSGVEASVSSNVAAIREAITVPVVVGFGISTPDQAAQVAASADGVVVGSAIVKLFERFTAAELGREVATFVSALREAIGN.

Catalysis depends on proton acceptor residues glutamate 49 and aspartate 60.

This sequence belongs to the TrpA family. As to quaternary structure, tetramer of two alpha and two beta chains.

It catalyses the reaction (1S,2R)-1-C-(indol-3-yl)glycerol 3-phosphate + L-serine = D-glyceraldehyde 3-phosphate + L-tryptophan + H2O. Its pathway is amino-acid biosynthesis; L-tryptophan biosynthesis; L-tryptophan from chorismate: step 5/5. Functionally, the alpha subunit is responsible for the aldol cleavage of indoleglycerol phosphate to indole and glyceraldehyde 3-phosphate. This Geobacter sulfurreducens (strain ATCC 51573 / DSM 12127 / PCA) protein is Tryptophan synthase alpha chain.